The primary structure comprises 308 residues: 4-hydroxy-3-methylbut-2-enyl diphosphate reductase (308 aa).

Position 12 (Cys12) interacts with [4Fe-4S] cluster. Residues His43 and His77 each contribute to the (2E)-4-hydroxy-3-methylbut-2-enyl diphosphate site. The dimethylallyl diphosphate site is built by His43 and His77. Isopentenyl diphosphate is bound by residues His43 and His77. Cys99 serves as a coordination point for [4Fe-4S] cluster. His127 provides a ligand contact to (2E)-4-hydroxy-3-methylbut-2-enyl diphosphate. His127 is a binding site for dimethylallyl diphosphate. Isopentenyl diphosphate is bound at residue His127. Glu129 serves as the catalytic Proton donor. Position 167 (Thr167) interacts with (2E)-4-hydroxy-3-methylbut-2-enyl diphosphate. Cys197 is a binding site for [4Fe-4S] cluster. (2E)-4-hydroxy-3-methylbut-2-enyl diphosphate-binding residues include Ser225, Ser226, Asn227, and Ser269. Dimethylallyl diphosphate contacts are provided by Ser225, Ser226, Asn227, and Ser269. 4 residues coordinate isopentenyl diphosphate: Ser225, Ser226, Asn227, and Ser269.

It belongs to the IspH family. [4Fe-4S] cluster serves as cofactor.

It carries out the reaction isopentenyl diphosphate + 2 oxidized [2Fe-2S]-[ferredoxin] + H2O = (2E)-4-hydroxy-3-methylbut-2-enyl diphosphate + 2 reduced [2Fe-2S]-[ferredoxin] + 2 H(+). It catalyses the reaction dimethylallyl diphosphate + 2 oxidized [2Fe-2S]-[ferredoxin] + H2O = (2E)-4-hydroxy-3-methylbut-2-enyl diphosphate + 2 reduced [2Fe-2S]-[ferredoxin] + 2 H(+). Its pathway is isoprenoid biosynthesis; dimethylallyl diphosphate biosynthesis; dimethylallyl diphosphate from (2E)-4-hydroxy-3-methylbutenyl diphosphate: step 1/1. It participates in isoprenoid biosynthesis; isopentenyl diphosphate biosynthesis via DXP pathway; isopentenyl diphosphate from 1-deoxy-D-xylulose 5-phosphate: step 6/6. In terms of biological role, catalyzes the conversion of 1-hydroxy-2-methyl-2-(E)-butenyl 4-diphosphate (HMBPP) into a mixture of isopentenyl diphosphate (IPP) and dimethylallyl diphosphate (DMAPP). Acts in the terminal step of the DOXP/MEP pathway for isoprenoid precursor biosynthesis. This Wolbachia pipientis subsp. Culex pipiens (strain wPip) protein is 4-hydroxy-3-methylbut-2-enyl diphosphate reductase.